A 72-amino-acid chain; its full sequence is Small ribosomal subunit protein bS18c (72 aa).

This sequence belongs to the bacterial ribosomal protein bS18 family. As to quaternary structure, part of the 30S ribosomal subunit.

The protein resides in the plastid. The protein localises to the chloroplast. The protein is Small ribosomal subunit protein bS18c of Emiliania huxleyi (Coccolithophore).